Reading from the N-terminus, the 306-residue chain is Embryogenic cell protein 40 (306 aa).

Disordered regions lie at residues 1 to 57, 80 to 171, and 188 to 306; these read MADL…ASHG, AATH…GGLG, and GTGI…PTSH. Over residues 12–23 the composition is skewed to polar residues; that stretch reads IQLTDQHGNPVQ. Residues 32–44 are compositionally biased toward low complexity; that stretch reads VHITGVATTGATT. Composition is skewed to gly residues over residues 85 to 119, 127 to 151, and 159 to 171; these read GSHG…GTGT, GPTG…GTGV, and GPTG…GGLG. Residues 194-204 show a composition bias toward low complexity; it reads GSAPASAGSHS. 2 stretches are compositionally biased toward basic and acidic residues: residues 205 to 218 and 243 to 259; these read HAPE…EQLH and KIKE…DEHT. Low complexity predominate over residues 260–278; that stretch reads TVATTKTTTAAHPGGAAVA. A compositionally biased stretch (basic and acidic residues) spans 279 to 298; it reads VEHHEHEKKSMLDKIKDKLP.

It belongs to the plant dehydrin family.

This is Embryogenic cell protein 40 (ECP40) from Daucus carota (Wild carrot).